Here is a 251-residue protein sequence, read N- to C-terminus: uncharacterized protein (251 aa).

Positions 6, 8, 90, 130, 154, and 202 each coordinate a divalent metal cation.

This sequence belongs to the metallo-dependent hydrolases superfamily. TatD-type hydrolase family. Requires a divalent metal cation as cofactor.

This is an uncharacterized protein from Haemophilus influenzae (strain ATCC 51907 / DSM 11121 / KW20 / Rd).